Reading from the N-terminus, the 155-residue chain is 3-hydroxyacyl-[acyl-carrier-protein] dehydratase FabZ (155 aa).

H58 is an active-site residue.

Belongs to the thioester dehydratase family. FabZ subfamily.

Its subcellular location is the cytoplasm. The catalysed reaction is a (3R)-hydroxyacyl-[ACP] = a (2E)-enoyl-[ACP] + H2O. Functionally, involved in unsaturated fatty acids biosynthesis. Catalyzes the dehydration of short chain beta-hydroxyacyl-ACPs and long chain saturated and unsaturated beta-hydroxyacyl-ACPs. This chain is 3-hydroxyacyl-[acyl-carrier-protein] dehydratase FabZ, found in Rhizobium etli (strain CIAT 652).